The following is a 416-amino-acid chain: Serine carboxypeptidase S10 family member 1 (416 aa).

A signal peptide spans 1-20 (MMKLLFIIISIIFVINVSNS). Asn33 and Asn84 each carry an N-linked (GlcNAc...) asparagine glycan. Residue Ser156 is part of the active site. Asn235, Asn273, and Asn295 each carry an N-linked (GlcNAc...) asparagine glycan. Residue Asp338 is part of the active site. Residue Asn385 is glycosylated (N-linked (GlcNAc...) asparagine). The active site involves His396.

Belongs to the peptidase S10 family.

It is found in the secreted. Functionally, probable carboxypeptidase. The chain is Serine carboxypeptidase S10 family member 1 from Dictyostelium discoideum (Social amoeba).